We begin with the raw amino-acid sequence, 715 residues long: Fatty acid oxidation complex subunit alpha (715 aa).

Positions Met1–Ala190 are enoyl-CoA hydratase/isomerase. Asp297 contributes to the substrate binding site. The interval Lys312–Gly715 is 3-hydroxyacyl-CoA dehydrogenase. NAD(+) contacts are provided by residues Met325, Asp344, Val401–Glu403, Lys408, and Ser430. The For 3-hydroxyacyl-CoA dehydrogenase activity role is filled by His451. Asn454 provides a ligand contact to NAD(+). Asn501 and Tyr660 together coordinate substrate.

It in the N-terminal section; belongs to the enoyl-CoA hydratase/isomerase family. This sequence in the C-terminal section; belongs to the 3-hydroxyacyl-CoA dehydrogenase family. In terms of assembly, heterotetramer of two alpha chains (FadB) and two beta chains (FadA).

It carries out the reaction a (3S)-3-hydroxyacyl-CoA + NAD(+) = a 3-oxoacyl-CoA + NADH + H(+). The enzyme catalyses a (3S)-3-hydroxyacyl-CoA = a (2E)-enoyl-CoA + H2O. The catalysed reaction is a 4-saturated-(3S)-3-hydroxyacyl-CoA = a (3E)-enoyl-CoA + H2O. It catalyses the reaction (3S)-3-hydroxybutanoyl-CoA = (3R)-3-hydroxybutanoyl-CoA. It carries out the reaction a (3Z)-enoyl-CoA = a 4-saturated (2E)-enoyl-CoA. The enzyme catalyses a (3E)-enoyl-CoA = a 4-saturated (2E)-enoyl-CoA. It functions in the pathway lipid metabolism; fatty acid beta-oxidation. Its function is as follows. Involved in the aerobic and anaerobic degradation of long-chain fatty acids via beta-oxidation cycle. Catalyzes the formation of 3-oxoacyl-CoA from enoyl-CoA via L-3-hydroxyacyl-CoA. It can also use D-3-hydroxyacyl-CoA and cis-3-enoyl-CoA as substrate. This is Fatty acid oxidation complex subunit alpha from Pseudomonas aeruginosa (strain LESB58).